A 369-amino-acid polypeptide reads, in one-letter code: MPTNRAAWQPAKKAPLLEVKAAPYPPPKANRIVVKNGAVAVNPIDWLIQSKGDIMFTWLKYPFVLGSDVAGEVVEVGKNVTRFQVGDRVLGFARGTDEKVNDSSEGAFQEYTVLVPDLTAHIPSSLSFESAAVIPLGLATAGAGLFQQDQLGLQLPTSPARPPTGQTVLIWGGSTSVGSNAIQLAVAAGYEVFTTASRKNFEYAAKLGAAKVFDYRSGSVTQDIIRAFKGRTSAGALAIGQGGAEACMEVLDHVQGRKFIALASYPVPQEEPKRLVMLRTIIFFVSWIISFKFKGLLKGIKSNFIFATSVNHNGIGKALFVDFLPDALRAGEFVPAPDAQVAGKGLESIQTAFEQQKQGVSAKKIVVSL.

The Enoyl reductase (ER) domain maps to 13-367 (KAPLLEVKAA…QGVSAKKIVV (355 aa)). 44–49 (IDWLIQ) contributes to the NADP(+) binding site. N79 and N101 each carry an N-linked (GlcNAc...) asparagine glycan. Residues 197–200 (SRKN) and Y215 contribute to the NADP(+) site. Residues 280-300 (TIIFFVSWIISFKFKGLLKGI) traverse the membrane as a helical segment. 360–361 (VS) is an NADP(+) binding site.

It belongs to the zinc-containing alcohol dehydrogenase family.

The protein localises to the membrane. The protein operates within secondary metabolite biosynthesis. Dehydrogenase; part of the gene cluster that mediates the biosynthesis of azaphilone pigments (MonAzPs), a complex mixture of compounds with a common azaphilone skeleton very widely used as food colorants. Within the pathway, pigH might be involved in the late steps of yellow pigments monascin and ankaflavin biosynthesis. The first step of the pathway is performed by the nrPKS pigA that forms the hexaketide precursor from successive condensations of five malonyl-CoA units, with a simple acetyl-CoA starter unit. The role of esterase pigG is not clear, but it may play at most a supplementary role in the formation of the benzaldehyde produced by the pigA nrPKS. This very reactive benzaldehyde is intercepted by the pigC ketoreductase that to provide the first stable enzyme-free MonAzPs intermediate, 6-(4-hydroxy-2-oxopentyl)-3-methyl-2,4-dioxocyclohexane carbaldehyde, also known as M7PKS-1. The FAD-dependent monooxygenase pigN hydroxylates M7PKS-1 at C-4, which triggers the formation of the pyran ring. PigJ, pigK and pigD are involved in the acetylation of the pyran ring. PigJ and pigK form the two subunits of a dedicated fungal FAS that produces the side chain fatty acyl moiety of MonAzPs and pigD transfers the fatty acyl chain to the C-4 alcohol. PigM and pigO are involved in the elimination of the omega-1 alcohol. PigM acts as an O-acetyltransferase that synthesizes the putative O-11 acetyl intermediate whereas pigO eliminates acetic acid to yield an intermediate with a C10(11) double bond. The dehydration of the C-11 alcohol followed by the reduction of the C6(7) double bond by the NAD(P)H-dependent oxidoreductase pigE increases the electrophilicity of the C-5 ketone of the resulting acyl benzopyran. This in turn sets up the C-5 ketone for an intramolecular Knoevenagel aldol condensation with the C-20 enol of the side chain. This condensation affords the characteristic linear tricyclic carbon skeletons of the yellow pigments that serve as the common precursors for the classical yellow pigments monascin and ankaflavin, orange pigments rubopunctatin and monascorubrin, and red pigments ribropunctamine and monascorubramine. The FAD-dependent oxidoreductase pigF is especially invoved in the biosynthesis of orange and red pigments via desaturation of C6(7). This is Dehydrogenase pigH from Monascus ruber (Mold).